The following is a 552-amino-acid chain: Olefin beta-lactone synthetase (552 aa).

ATP contacts are provided by residues 182–190 (TSGSTGVPK), 316–321 (TPYGAT), D425, and R440.

It belongs to the ATP-dependent AMP-binding enzyme family. Monomer.

It catalyses the reaction a (2R,3S)-2-alkyl-3-hydroxyalkanoate + ATP = a cis-3-alkyl-4-alkyloxetan-2-one + AMP + diphosphate. Functionally, involved in olefin biosynthesis. Catalyzes the conversion of beta-hydroxy acid substrates to beta-lactones in the presence of ATP. Can use all four stereoisomers of 2-hexyl-3-hydroxydecanoic acid. The polypeptide is Olefin beta-lactone synthetase (Stenotrophomonas maltophilia (strain K279a)).